A 275-amino-acid polypeptide reads, in one-letter code: UBX domain-containing protein 8 (275 aa).

Position 1 (Met-1) is a topological domain, cytoplasmic. The helical transmembrane segment at 2–22 (ASRGVVGIFLLSALPLLCLEL) threads the bilayer. Residues 23-33 (RRGKPDLGIKD) are Lumenal-facing. A helical membrane pass occupies residues 34 to 54 (LILLCGRIFLLLALLTLIISV). Over 55 to 275 (TTSWVNSFKP…LNVEEKEQSS (221 aa)) the chain is Cytoplasmic. The disordered stretch occupies residues 137 to 181 (DEDLELDSESQTSFETSNREAAKRRNLPNSVTNISPPAEQPTKKE). In terms of domain architecture, UBX spans 192 to 268 (TAEEVVTVAL…GITVDTVLNV (77 aa)).

Interacts with SYVN1 and VCP.

It is found in the endoplasmic reticulum membrane. Functionally, involved in endoplasmic reticulum-associated degradation (ERAD) for misfolded lumenal proteins, possibly by tethering VCP to the endoplasmic reticulum membrane. May play a role in reproduction. May play a role in reproduction. This is UBX domain-containing protein 8 (UBXN8) from Bos taurus (Bovine).